Reading from the N-terminus, the 263-residue chain is Probable methylthioribulose-1-phosphate dehydratase (263 aa).

Cys102 lines the substrate pocket. Zn(2+) contacts are provided by His120 and His122. Glu144 functions as the Proton donor/acceptor in the catalytic mechanism. His200 serves as a coordination point for Zn(2+).

Belongs to the aldolase class II family. MtnB subfamily. Zn(2+) serves as cofactor.

The protein localises to the cytoplasm. It carries out the reaction 5-(methylsulfanyl)-D-ribulose 1-phosphate = 5-methylsulfanyl-2,3-dioxopentyl phosphate + H2O. It functions in the pathway amino-acid biosynthesis; L-methionine biosynthesis via salvage pathway; L-methionine from S-methyl-5-thio-alpha-D-ribose 1-phosphate: step 2/6. Functionally, catalyzes the dehydration of methylthioribulose-1-phosphate (MTRu-1-P) into 2,3-diketo-5-methylthiopentyl-1-phosphate (DK-MTP-1-P). The sequence is that of Probable methylthioribulose-1-phosphate dehydratase from Caenorhabditis elegans.